We begin with the raw amino-acid sequence, 207 residues long: Large ribosomal subunit protein uL4 (207 aa).

The disordered stretch occupies residues 50-76; sequence AVKNRSAVSGGGRKPWKQKGTGRARQG.

It belongs to the universal ribosomal protein uL4 family. In terms of assembly, part of the 50S ribosomal subunit.

Functionally, one of the primary rRNA binding proteins, this protein initially binds near the 5'-end of the 23S rRNA. It is important during the early stages of 50S assembly. It makes multiple contacts with different domains of the 23S rRNA in the assembled 50S subunit and ribosome. In terms of biological role, forms part of the polypeptide exit tunnel. In Macrococcus caseolyticus (strain JCSC5402) (Macrococcoides caseolyticum), this protein is Large ribosomal subunit protein uL4.